The chain runs to 707 residues: Bone morphogenetic protein 1 (707 aa).

Residues 57–90 (SGAATNISRPEKGRRTRKERRRSREKRASTSRPE) form a disordered region. Asparagine 62 is a glycosylation site (N-linked (GlcNAc...) asparagine). A compositionally biased stretch (basic residues) spans 68-81 (KGRRTRKERRRSRE). The Peptidase M12A domain maps to 84 to 283 (ASTSRPERVW…AQARKLYKCP (200 aa)). Residue asparagine 105 is glycosylated (N-linked (GlcNAc...) asparagine). Cystine bridges form between cysteine 126/cysteine 282, cysteine 146/cysteine 168, cysteine 148/cysteine 149, and cysteine 285/cysteine 311. Histidine 176 lines the Zn(2+) pocket. Residue glutamate 177 is part of the active site. Zn(2+)-binding residues include histidine 180 and histidine 186. 2 CUB domains span residues 285-397 (CGET…YEAL) and 398-509 (CGGE…NYFK). Residues asparagine 295 and asparagine 326 are each glycosylated (N-linked (GlcNAc...) asparagine). 8 disulfide bridges follow: cysteine 338/cysteine 360, cysteine 398/cysteine 424, cysteine 451/cysteine 473, cysteine 514/cysteine 526, cysteine 522/cysteine 535, cysteine 537/cysteine 550, cysteine 554/cysteine 580, and cysteine 607/cysteine 629. The EGF-like; calcium-binding domain maps to 510-551 (EVDECSRPNNGGCEQRCVNTLGSYKCACDPGYELGQDKKSCE). A CUB 3 domain is found at 554–666 (CGGFLTKLNG…KGFQANFFSE (113 aa)). A glycan (N-linked (GlcNAc...) asparagine) is linked at asparagine 562. The disordered stretch occupies residues 682–707 (RGQQNQAPKRVRPRMRLRTVKKTRPP). Residues 690 to 707 (KRVRPRMRLRTVKKTRPP) show a composition bias toward basic residues.

As to quaternary structure, interacts with olfml3/ont1. The cofactor is Zn(2+). Proteolytically activated in the trans-Golgi network by furin-like/paired basic proprotein convertases, cleavage is not required for secretion.

The protein localises to the golgi apparatus. The protein resides in the trans-Golgi network. It is found in the secreted. Its subcellular location is the extracellular space. It localises to the extracellular matrix. In terms of biological role, metalloprotease involved in pattern formation in gastrula and later differentiation of developing organs. Able to cleave chordin (chrd), suggesting that it may act in dorsoventral patterning during early development by regulating the chordin (chrd) activity. In Xenopus laevis (African clawed frog), this protein is Bone morphogenetic protein 1 (bmp1).